The primary structure comprises 205 residues: Large ribosomal subunit protein uL18 (205 aa).

Belongs to the universal ribosomal protein uL18 family. As to quaternary structure, part of the 50S ribosomal subunit. Contacts the 5S and 23S rRNAs.

In terms of biological role, this is one of the proteins that bind and probably mediate the attachment of the 5S RNA into the large ribosomal subunit, where it forms part of the central protuberance. The polypeptide is Large ribosomal subunit protein uL18 (Haloquadratum walsbyi (strain DSM 16790 / HBSQ001)).